The chain runs to 202 residues: ATP-dependent Clp protease proteolytic subunit (202 aa).

The active-site Nucleophile is the serine 106. The active site involves histidine 131.

It belongs to the peptidase S14 family. Fourteen ClpP subunits assemble into 2 heptameric rings which stack back to back to give a disk-like structure with a central cavity, resembling the structure of eukaryotic proteasomes.

Its subcellular location is the cytoplasm. The enzyme catalyses Hydrolysis of proteins to small peptides in the presence of ATP and magnesium. alpha-casein is the usual test substrate. In the absence of ATP, only oligopeptides shorter than five residues are hydrolyzed (such as succinyl-Leu-Tyr-|-NHMec, and Leu-Tyr-Leu-|-Tyr-Trp, in which cleavage of the -Tyr-|-Leu- and -Tyr-|-Trp bonds also occurs).. In terms of biological role, cleaves peptides in various proteins in a process that requires ATP hydrolysis. Has a chymotrypsin-like activity. Plays a major role in the degradation of misfolded proteins. The protein is ATP-dependent Clp protease proteolytic subunit of Acidovorax sp. (strain JS42).